The chain runs to 355 residues: Anthranilate phosphoribosyltransferase (355 aa).

5-phospho-alpha-D-ribose 1-diphosphate contacts are provided by residues glycine 102, 105-106 (GD), serine 110, 112-115 (NIST), 130-138 (KHGNRSVSS), and serine 142. Position 102 (glycine 102) interacts with anthranilate. Serine 114 provides a ligand contact to Mg(2+). Residue asparagine 133 participates in anthranilate binding. Arginine 188 is a binding site for anthranilate. The Mg(2+) site is built by aspartate 246 and glutamate 247.

The protein belongs to the anthranilate phosphoribosyltransferase family. As to quaternary structure, homodimer. Requires Mg(2+) as cofactor.

It carries out the reaction N-(5-phospho-beta-D-ribosyl)anthranilate + diphosphate = 5-phospho-alpha-D-ribose 1-diphosphate + anthranilate. It participates in amino-acid biosynthesis; L-tryptophan biosynthesis; L-tryptophan from chorismate: step 2/5. Functionally, catalyzes the transfer of the phosphoribosyl group of 5-phosphorylribose-1-pyrophosphate (PRPP) to anthranilate to yield N-(5'-phosphoribosyl)-anthranilate (PRA). In Pectobacterium atrosepticum (strain SCRI 1043 / ATCC BAA-672) (Erwinia carotovora subsp. atroseptica), this protein is Anthranilate phosphoribosyltransferase.